The sequence spans 135 residues: uncharacterized protein (135 aa).

This is an uncharacterized protein from Methanocaldococcus jannaschii (strain ATCC 43067 / DSM 2661 / JAL-1 / JCM 10045 / NBRC 100440) (Methanococcus jannaschii).